The sequence spans 184 residues: Potassium-transporting ATPase KdpC subunit (184 aa).

Residues 10-30 (LTFLMVVLFAVIYPLAIYGIA) form a helical membrane-spanning segment.

It belongs to the KdpC family. In terms of assembly, the system is composed of three essential subunits: KdpA, KdpB and KdpC.

The protein localises to the cell inner membrane. Its function is as follows. Part of the high-affinity ATP-driven potassium transport (or Kdp) system, which catalyzes the hydrolysis of ATP coupled with the electrogenic transport of potassium into the cytoplasm. This subunit acts as a catalytic chaperone that increases the ATP-binding affinity of the ATP-hydrolyzing subunit KdpB by the formation of a transient KdpB/KdpC/ATP ternary complex. The chain is Potassium-transporting ATPase KdpC subunit from Flavobacterium psychrophilum (strain ATCC 49511 / DSM 21280 / CIP 103535 / JIP02/86).